The chain runs to 35 residues: Kappa-stichotoxin-She3a (35 aa).

Residues 3 to 35 enclose the ShKT domain; sequence CIDTIPKSRCTAFQCKHSMKYRLSFCRKTCGTC. 3 disulfide bridges follow: C3–C35, C12–C28, and C17–C32.

This sequence belongs to the sea anemone type 1 potassium channel toxin family. Type 1a subfamily.

It localises to the secreted. It is found in the nematocyst. Peptide with both antimicrobial and neurotoxin activities. Inhibits voltage-dependent potassium channels. Potently blocks Kv1.1/KCNA1 (IC(50)=6.7-87 pM) and Kv1.3/KCNA3 (IC(50)=10-250 pM). Less potently blocks Kv1.4/KCNA4 (IC(50)=0.31 nM), and Kv1.6/KCNA6 (IC(50)=0.16 nM). Shows moderate activity on Kv1.2/KCNA2 (IC(50)=9 nM), Kv1.7/KCNA7 (IC(50)=11.5 nM), and KCa3.1/KCNN4 (Kd=0.03-30 nM). Blocks Kv channels by binding to a shallow vestibule at the outer entrance to the ion conduction pathway and occluding the entrance to the pore. Shows antibacterial activity against all tested bacteria (the Gram-positive bacteria B.subtilis and S.aureus, and the Gram-negative bacteria S.typhimurium and P.aeruginosa). The polypeptide is Kappa-stichotoxin-She3a (Stichodactyla helianthus (Sun anemone)).